The chain runs to 151 residues: uncharacterized protein (151 aa).

This is an uncharacterized protein from Escherichia coli.